The chain runs to 341 residues: Beta-ketoacyl-[acyl-carrier-protein] synthase III 1 (341 aa).

Active-site residues include Cys-113 and His-249. An ACP-binding region spans residues 250–254 (QANIR). The active site involves Asn-279.

The protein belongs to the thiolase-like superfamily. FabH family. As to quaternary structure, homodimer.

Its subcellular location is the cytoplasm. It catalyses the reaction malonyl-[ACP] + acetyl-CoA + H(+) = 3-oxobutanoyl-[ACP] + CO2 + CoA. It functions in the pathway lipid metabolism; fatty acid biosynthesis. Catalyzes the condensation reaction of fatty acid synthesis by the addition to an acyl acceptor of two carbons from malonyl-ACP. Catalyzes the first condensation reaction which initiates fatty acid synthesis and may therefore play a role in governing the total rate of fatty acid production. Possesses both acetoacetyl-ACP synthase and acetyl transacylase activities. Its substrate specificity determines the biosynthesis of branched-chain and/or straight-chain of fatty acids. This chain is Beta-ketoacyl-[acyl-carrier-protein] synthase III 1, found in Deinococcus radiodurans (strain ATCC 13939 / DSM 20539 / JCM 16871 / CCUG 27074 / LMG 4051 / NBRC 15346 / NCIMB 9279 / VKM B-1422 / R1).